Consider the following 335-residue polypeptide: G-protein coupled receptor 157 (335 aa).

Residues 1–15 (MQPSPPPTELVPSER) lie on the Extracellular side of the membrane. A helical transmembrane segment spans residues 16 to 36 (AVVLLSCALSALGSGLLVATH). At 37–48 (ALWPDLRSRARR) the chain is on the cytoplasmic side. A helical membrane pass occupies residues 49 to 69 (LLLFLSLADLLSAASYFYGVL). The Extracellular segment spans residues 70-87 (QNFAGPSWDCVLQGALST). A helical membrane pass occupies residues 88-108 (FANTSSFFWTVAIALYLYLSI). Over 109–119 (VRAARGPRTDR) the chain is Cytoplasmic. A helical transmembrane segment spans residues 120–140 (LLWAFHVVSWGVPLVITVAAV). The Extracellular segment spans residues 141-166 (ALKKIGYDASDVSVGWCWIDLEAKDH). Residues 167-187 (VLWMLLTGKLWEMLAYVLLPL) form a helical membrane-spanning segment. At 188-226 (LYLLVRKHINRAHTALSEYRPILSQEHRLLRHSSMADKK) the chain is on the cytoplasmic side. Residues 227 to 247 (LVLIPLIFIGLRVWSTVRFVL) form a helical membrane-spanning segment. Residues 248–258 (TLCGSPAVQTP) are Extracellular-facing. A helical transmembrane segment spans residues 259–279 (VLVVLHGIGNTFQGGANCIMF). Residues 280–335 (VLCTRAVRTRLFSLCCCCCSSQPPTKSPAGTPKAPAPSKPGESQESQGTPGELPST) lie on the Cytoplasmic side of the membrane. Residues 300 to 335 (SQPPTKSPAGTPKAPAPSKPGESQESQGTPGELPST) are disordered. A compositionally biased stretch (polar residues) spans 320–335 (GESQESQGTPGELPST).

It belongs to the G-protein coupled receptor 2 family.

It is found in the cell projection. It localises to the cilium membrane. Functionally, orphan receptor that promotes neuronal differentiation of radial glial progenitors (RGPs). The activity of this receptor is mediated by a G(q)-protein that activates a phosphatidylinositol-calcium second messenger. The sequence is that of G-protein coupled receptor 157 (GPR157) from Homo sapiens (Human).